Here is a 586-residue protein sequence, read N- to C-terminus: Asparagine synthetase [glutamine-hydrolyzing] (586 aa).

Cys-2 acts as the For GATase activity in catalysis. The 184-residue stretch at 2–185 (CGILAVLGVV…PGHLYSSKTG (184 aa)) folds into the Glutamine amidotransferase type-2 domain. L-glutamine contacts are provided by residues 50-54 (RLAII), 75-77 (NGE), and Asp-98. Residues 193–516 (PPWFSETVPS…PQDSARETVP (324 aa)) form the Asparagine synthetase domain. Residues Leu-231, Ile-267, and 341 to 342 (SG) each bind ATP.

It catalyses the reaction L-aspartate + L-glutamine + ATP + H2O = L-asparagine + L-glutamate + AMP + diphosphate + H(+). The protein operates within amino-acid biosynthesis; L-asparagine biosynthesis; L-asparagine from L-aspartate (L-Gln route): step 1/1. In terms of biological role, essential for nitrogen assimilation, distribution and remobilization within the plant via the phloem. In Zea mays (Maize), this protein is Asparagine synthetase [glutamine-hydrolyzing] (ASN1).